We begin with the raw amino-acid sequence, 498 residues long: Cytochrome P450 71B5 (498 aa).

The chain crosses the membrane as a helical span at residues Ile-3–Pro-23. Cys-439 is a heme binding site.

Belongs to the cytochrome P450 family. The cofactor is heme.

The protein localises to the membrane. The sequence is that of Cytochrome P450 71B5 (CYP71B5) from Arabidopsis thaliana (Mouse-ear cress).